The following is a 749-amino-acid chain: Patatin-like phospholipase domain-containing protein An01g04180 (749 aa).

The segment at 1-21 (MNGAEKSAAGDTYDPSTIPDY) is disordered. Residues 87–107 (WPFLFTVFGWITALAFAYTLT) traverse the membrane as a helical segment. A PNPLA domain is found at 277–468 (LCLSGGATFA…RTDIPIKALN (192 aa)). A GXSXG motif is present at residues 308–312 (GTSGG). Catalysis depends on Ser-310, which acts as the Nucleophile. The active-site Proton acceptor is Asp-455. Residues 619-726 (AGGRPISPAP…STGSSIFEEV (108 aa)) are disordered. A compositionally biased stretch (basic and acidic residues) spans 649 to 664 (PLNERLDHNLPERRGD). A compositionally biased stretch (low complexity) spans 685 to 707 (SLSENSSNESAARPSSSSSSSRL).

The protein belongs to the PLPL family.

Its subcellular location is the membrane. Its function is as follows. Probable lipid hydrolase. This Aspergillus niger (strain ATCC MYA-4892 / CBS 513.88 / FGSC A1513) protein is Patatin-like phospholipase domain-containing protein An01g04180.